Consider the following 147-residue polypeptide: Large ribosomal subunit protein bL9 (147 aa).

This sequence belongs to the bacterial ribosomal protein bL9 family.

Binds to the 23S rRNA. This chain is Large ribosomal subunit protein bL9, found in Exiguobacterium sp. (strain ATCC BAA-1283 / AT1b).